The chain runs to 795 residues: Protein ROOT HAIR DEFECTIVE 3 homolog 1 (795 aa).

The Cytoplasmic portion of the chain corresponds to 1-682; it reads MDADKSEGCC…EANRRGNNWL (682 aa). The region spanning 39–254 is the GB1/RHD3-type G domain; the sequence is GLSYAVVSIM…IAPGGLAGDR (216 aa). 49-56 is a GTP binding site; it reads GPQSSGKS. Residues 218–244 adopt a coiled-coil conformation; sequence VALSSYEEKEEQFKEQIASLRQRFMHS. Residues 683–703 form a helical membrane-spanning segment; that stretch reads PPPWAILALIVLGFNEFMTLL. The Lumenal portion of the chain corresponds to 704–706; the sequence is RNP. The chain crosses the membrane as a helical span at residues 707–727; that stretch reads LYLGVMFVAFLLAKALWTQLD. At 728–795 the chain is on the cytoplasmic side; the sequence is IPGEFRNGAL…PDHKSSSKED (68 aa). Residues 761–795 form a disordered region; it reads QGEDPPAANPENRRSSNNTSSSENPPDHKSSSKED. Low complexity predominate over residues 775–784; the sequence is SSNNTSSSEN. Residues 785–795 are compositionally biased toward basic and acidic residues; the sequence is PPDHKSSSKED.

Belongs to the TRAFAC class dynamin-like GTPase superfamily. GB1/RHD3 GTPase family. RHD3 subfamily. In terms of tissue distribution, specifically expressed in flowers.

Its subcellular location is the endoplasmic reticulum membrane. Functionally, probable GTP-binding protein that may be involved in cell development. This is Protein ROOT HAIR DEFECTIVE 3 homolog 1 from Arabidopsis thaliana (Mouse-ear cress).